We begin with the raw amino-acid sequence, 57 residues long: Potassium channel toxin alpha-KTx 4.2 (57 aa).

The N-terminal stretch at 1-20 is a signal peptide; sequence MKVLYGILIIFILCSMFYLS. A propeptide spans 21-22 (removed by a carboxypeptidase); the sequence is QE. 3 cysteine pairs are disulfide-bonded: Cys-29-Cys-50, Cys-35-Cys-55, and Cys-39-Cys-57.

It belongs to the short scorpion toxin superfamily. Potassium channel inhibitor family. Alpha-KTx 04 subfamily. Expressed by the venom gland.

Its subcellular location is the secreted. In terms of biological role, blocker for small-conductance calcium-activated potassium channels KCa2.2/KCNN2 (Kd=80 nM) and KCa2.3/KCNN3 (Kd=197 nM) and ERG1/Kv11.1/KCNH2 potassium channels (53% inhibition at 5 uM). Has also been shown to inhibit Kv1.1/KCNA1 and Nav1.7/SCN9A with a moderate potency, as well as Kv11.1/KCNH2/ERG1 and Kv1.2/KCNA2 with a low potency. This Tityus serrulatus (Brazilian scorpion) protein is Potassium channel toxin alpha-KTx 4.2.